Reading from the N-terminus, the 387-residue chain is Alkanesulfonate monooxygenase (387 aa).

It belongs to the SsuD family.

The catalysed reaction is an alkanesulfonate + FMNH2 + O2 = an aldehyde + FMN + sulfite + H2O + 2 H(+). Functionally, catalyzes the desulfonation of aliphatic sulfonates. The chain is Alkanesulfonate monooxygenase from Cupriavidus metallidurans (strain ATCC 43123 / DSM 2839 / NBRC 102507 / CH34) (Ralstonia metallidurans).